The chain runs to 270 residues: SPbeta prophage-derived DNA ligase-like protein LigB (270 aa).

Catalysis depends on K25, which acts as the N6-AMP-lysine intermediate.

Belongs to the ATP-dependent DNA ligase family.

This is SPbeta prophage-derived DNA ligase-like protein LigB (ligB) from Bacillus subtilis (strain 168).